A 144-amino-acid chain; its full sequence is Transcriptional regulator SlyA (144 aa).

Positions 2–135 constitute an HTH marR-type domain; the sequence is ESPLGSDLAR…LNKIISKLEK (134 aa). Positions 49-72 form a DNA-binding region, H-T-H motif; sequence QIQLAKAIGIEQPSLVRTLDQLEE.

This sequence belongs to the SlyA family. Homodimer.

Its function is as follows. Transcription regulator that can specifically activate or repress expression of target genes. This chain is Transcriptional regulator SlyA, found in Blochmanniella pennsylvanica (strain BPEN).